Here is a 291-residue protein sequence, read N- to C-terminus: Probable peptide ABC transporter permease protein y4tQ (291 aa).

A run of 5 helical transmembrane segments spans residues 28–48 (LVLL…AAPL), 92–112 (LIVG…IGVI), 137–157 (LLAI…IVAI), 213–233 (ATVC…GVGV), and 249–269 (LFLA…AVTV). Residues 88–276 (ARISLIVGLL…VTVLAVNLLG (189 aa)) form the ABC transmembrane type-1 domain.

Belongs to the binding-protein-dependent transport system permease family. OppBC subfamily.

It localises to the cell inner membrane. Its function is as follows. Probably part of the binding-protein-dependent transport system y4tOPQRS for a peptide. Probably responsible for the translocation of the substrate across the membrane. This Sinorhizobium fredii (strain NBRC 101917 / NGR234) protein is Probable peptide ABC transporter permease protein y4tQ.